We begin with the raw amino-acid sequence, 906 residues long: NACHT, LRR and PYD domains-containing protein 1b allele 4 (906 aa).

The segment at 1–22 (MEESPPKQKSNTKVAQHEGQQD) is disordered. In terms of domain architecture, NACHT spans 126 to 435 (QLVIIEGAAG…EFFAAISCIL (310 aa)). 132-139 (GAAGIGKS) serves as a coordination point for ATP. LRR repeat units lie at residues 627-647 (NLEGLDLSGNSLRYSVVQSLC) and 684-704 (SLTELYLQLNDLGDDGVRMLC). An FIIND (incomplete) domain is found at 789–906 (FWGPTGPVAT…FQEHGSRNAR (118 aa)).

Belongs to the NLRP family. Expressed in macrophages.

Its subcellular location is the cytoplasm. The protein resides in the cytosol. Its function is as follows. Probable inactive allele of Nlrp1b, which lacks a CARD domain, suggesting that it is not able to form an inflammasome. Contrary to Nlrp1b allele 1, allele 4 is not activated by B.anthracis lethal toxin and no other activation signal is reported. The polypeptide is NACHT, LRR and PYD domains-containing protein 1b allele 4 (Mus musculus (Mouse)).